The chain runs to 973 residues: DNA repair protein rhp26 (973 aa).

Positions 35–107 (ESREIEKKRL…DIKRRLNNED (73 aa)) form a coiled coil. The disordered stretch occupies residues 230–251 (RDQASASENNKDRGEFEGKDEW). The segment covering 238 to 251 (NNKDRGEFEGKDEW) has biased composition (basic and acidic residues). One can recognise a Helicase ATP-binding domain in the interval 289 to 490 (WELYCQEAGG…WNLFDFVFPG (202 aa)). Position 302 to 309 (302 to 309 (DEMGLGKT)) interacts with ATP. Positions 367–386 (SREKRQYESDASESEAEESK) are disordered. Residues 441–444 (DEGH) carry the DEAH box motif. A Helicase C-terminal domain is found at 629–789 (VIRALLTLWK…RRFFKMTDLH (161 aa)). Disordered regions lie at residues 803 to 846 (ETGS…KGKK), 863 to 882 (KYKP…STLG), and 930 to 973 (AVSS…KQRR). Residues 834–846 (DRKKHKIHDKGKK) are compositionally biased toward basic residues. Composition is skewed to polar residues over residues 868–882 (QESN…STLG) and 947–965 (STNV…SSTL).

The protein localises to the cytoplasm. The protein resides in the nucleus. Involved in transcription-coupled repair (TCR). This is DNA repair protein rhp26 (rhp26) from Schizosaccharomyces pombe (strain 972 / ATCC 24843) (Fission yeast).